The primary structure comprises 354 residues: DNA-binding protein EMBP-1 (354 aa).

3 disordered regions span residues 1–24, 106–193, and 230–273; these read MASS…TPAQ, SAAG…RSAS, and EVNA…RKQQ. Low complexity-rich tracts occupy residues 127 to 140 and 232 to 245; these read SSSG…QGSS and NAAA…SLSQ. The span at 246–265 shows a compositional bias: basic and acidic residues; sequence MDERELKRERRKQSNRESAR. The region spanning 250–313 is the bZIP domain; it reads ELKRERRKQS…KTMETENKKL (64 aa). The interval 252 to 271 is basic motif; that stretch reads KRERRKQSNRESARRSRLRK. The segment at 278 to 299 is leucine-zipper; that stretch reads LAQKVSELTAANGTLRSELDQL.

The protein belongs to the bZIP family. In terms of assembly, heterodimer.

The protein resides in the nucleus. Its function is as follows. Interacts specifically with the 8-bp sequence 5'-CACGTGGC-3'in the abscisic acid response element (ABARE). Also binds to the hexamer motif 5'-ACGTCA-3' of histone gene promoters. The polypeptide is DNA-binding protein EMBP-1 (Triticum aestivum (Wheat)).